Consider the following 549-residue polypeptide: Dihydroxy-acid dehydratase (549 aa).

Asp-78 contacts Mg(2+). Cys-119 contacts [2Fe-2S] cluster. 2 residues coordinate Mg(2+): Asp-120 and Lys-121. N6-carboxylysine is present on Lys-121. Cys-192 serves as a coordination point for [2Fe-2S] cluster. Glu-439 contacts Mg(2+). Ser-465 (proton acceptor) is an active-site residue.

The protein belongs to the IlvD/Edd family. As to quaternary structure, homodimer. It depends on [2Fe-2S] cluster as a cofactor. Requires Mg(2+) as cofactor.

It catalyses the reaction (2R)-2,3-dihydroxy-3-methylbutanoate = 3-methyl-2-oxobutanoate + H2O. It carries out the reaction (2R,3R)-2,3-dihydroxy-3-methylpentanoate = (S)-3-methyl-2-oxopentanoate + H2O. Its pathway is amino-acid biosynthesis; L-isoleucine biosynthesis; L-isoleucine from 2-oxobutanoate: step 3/4. It functions in the pathway amino-acid biosynthesis; L-valine biosynthesis; L-valine from pyruvate: step 3/4. Functions in the biosynthesis of branched-chain amino acids. Catalyzes the dehydration of (2R,3R)-2,3-dihydroxy-3-methylpentanoate (2,3-dihydroxy-3-methylvalerate) into 2-oxo-3-methylpentanoate (2-oxo-3-methylvalerate) and of (2R)-2,3-dihydroxy-3-methylbutanoate (2,3-dihydroxyisovalerate) into 2-oxo-3-methylbutanoate (2-oxoisovalerate), the penultimate precursor to L-isoleucine and L-valine, respectively. The polypeptide is Dihydroxy-acid dehydratase (Endomicrobium trichonymphae).